The chain runs to 225 residues: Uracil-DNA glycosylase (225 aa).

Asp-65 serves as the catalytic Proton acceptor.

This sequence belongs to the uracil-DNA glycosylase (UDG) superfamily. UNG family.

The protein resides in the cytoplasm. It catalyses the reaction Hydrolyzes single-stranded DNA or mismatched double-stranded DNA and polynucleotides, releasing free uracil.. Its function is as follows. Excises uracil residues from the DNA which can arise as a result of misincorporation of dUMP residues by DNA polymerase or due to deamination of cytosine. The polypeptide is Uracil-DNA glycosylase (Clostridium beijerinckii (strain ATCC 51743 / NCIMB 8052) (Clostridium acetobutylicum)).